The chain runs to 437 residues: Na(+)/H(+) antiporter NhaA (437 aa).

11 helical membrane-spanning segments follow: residues 29–49, 74–94, 111–131, 139–159, 168–188, 196–216, 229–249, 307–327, 341–361, 376–396, and 411–431; these read TAGIILLLSTLLALGLANTAW, LKHWINDGLMTFFFFVIALEL, LPVAAALGGMAAPAGIYLLLV, GWGTVMSTDTAFVIGCLALLG, LFLLSLAIFDDIGAILIVAVG, VALGTGGLGFAFVAGIALLGI, IWLAFDASGVHATLVGVILGL, IALHPWVAFAIMPLFAVSNAG, IAIVVAFVVGKPAGIVLFSFL, WSLLAAGSLLTGIGFTMALFI, and LGVLGASVISAALGFMALTLL.

This sequence belongs to the NhaA Na(+)/H(+) (TC 2.A.33) antiporter family.

The protein resides in the cell inner membrane. The enzyme catalyses Na(+)(in) + 2 H(+)(out) = Na(+)(out) + 2 H(+)(in). Na(+)/H(+) antiporter that extrudes sodium in exchange for external protons. The sequence is that of Na(+)/H(+) antiporter NhaA from Rhizobium meliloti (strain 1021) (Ensifer meliloti).